The chain runs to 331 residues: Germ cell-specific gene 1-like protein (331 aa).

Over 1 to 8 (MKTSRRGR) the chain is Cytoplasmic. A helical membrane pass occupies residues 9–29 (ALLAVALNLLALLFATTAFLT). At 30–132 (THWCQGTQRV…FIDLAPASEK (103 aa)) the chain is on the extracellular side. The helical transmembrane segment at 133-153 (GVLWLSVVSEVLYILLLVVGF) threads the bilayer. Topologically, residues 154-173 (SLMCLELFHSSNVIDGLKLN) are cytoplasmic. A helical membrane pass occupies residues 174–194 (AFAAVFTVLSGLLGMVAHMMY). At 195–217 (TQVFQVTVSLGPEDWRPHSWDYG) the chain is on the extracellular side. Residues 218-238 (WSFCLAWGSFTCCMAASVTTL) form a helical membrane-spanning segment. At 239 to 331 (NSYTKTVIEF…RQCWVLGHWV (93 aa)) the chain is on the cytoplasmic side.

It belongs to the GSG1 family. As to quaternary structure, component of the inner core of AMPAR complex. AMPAR complex consists of an inner core made of 4 pore-forming GluA/GRIA proteins (GRIA1, GRIA2, GRIA3 and GRIA4) and 4 major auxiliary subunits arranged in a twofold symmetry. One of the two pairs of distinct binding sites is occupied either by CNIH2, CNIH3 or CACNG2, CACNG3. The other harbors CACNG2, CACNG3, CACNG4, CACNG8 or GSG1L. This inner core of AMPAR complex is complemented by outer core constituents binding directly to the GluA/GRIA proteins at sites distinct from the interaction sites of the inner core constituents. Outer core constituents include at least PRRT1, PRRT2, CKAMP44/SHISA9, FRRS1L and NRN1. The proteins of the inner and outer core serve as a platform for other, more peripherally associated AMPAR constituents. Alone or in combination, these auxiliary subunits control the gating and pharmacology of the AMPAR complex and profoundly impact their biogenesis and protein processing.

It is found in the cell membrane. Its subcellular location is the synapse. As a component of the inner core of AMPAR complex, modifies AMPA receptor (AMPAR) gating. In Homo sapiens (Human), this protein is Germ cell-specific gene 1-like protein (GSG1L).